A 383-amino-acid polypeptide reads, in one-letter code: 1-deoxy-D-xylulose 5-phosphate reductoisomerase (383 aa).

Residues T10, G11, S12, I13, G36, R37, N38, and N122 each contribute to the NADPH site. Residue K123 coordinates 1-deoxy-D-xylulose 5-phosphate. An NADPH-binding site is contributed by E124. Position 148 (D148) interacts with Mn(2+). The 1-deoxy-D-xylulose 5-phosphate site is built by S149, E150, S174, and H197. E150 lines the Mn(2+) pocket. G203 contributes to the NADPH binding site. Residues S210, N215, K216, and E219 each coordinate 1-deoxy-D-xylulose 5-phosphate. E219 is a binding site for Mn(2+).

It belongs to the DXR family. Mg(2+) is required as a cofactor. Mn(2+) serves as cofactor.

The catalysed reaction is 2-C-methyl-D-erythritol 4-phosphate + NADP(+) = 1-deoxy-D-xylulose 5-phosphate + NADPH + H(+). It participates in isoprenoid biosynthesis; isopentenyl diphosphate biosynthesis via DXP pathway; isopentenyl diphosphate from 1-deoxy-D-xylulose 5-phosphate: step 1/6. Catalyzes the NADPH-dependent rearrangement and reduction of 1-deoxy-D-xylulose-5-phosphate (DXP) to 2-C-methyl-D-erythritol 4-phosphate (MEP). The protein is 1-deoxy-D-xylulose 5-phosphate reductoisomerase of Bacillus subtilis (strain 168).